The following is a 328-amino-acid chain: Malate dehydrogenase (328 aa).

12 to 18 (GAAGQIA) lines the NAD(+) pocket. Substrate is bound by residues arginine 93 and arginine 99. Residues asparagine 106, glutamine 113, and 130–132 (VGN) each bind NAD(+). Residues asparagine 132 and arginine 163 each coordinate substrate. The Proton acceptor role is filled by histidine 188.

Belongs to the LDH/MDH superfamily. MDH type 2 family.

It carries out the reaction (S)-malate + NAD(+) = oxaloacetate + NADH + H(+). Its function is as follows. Catalyzes the reversible oxidation of malate to oxaloacetate. In Burkholderia multivorans (strain ATCC 17616 / 249), this protein is Malate dehydrogenase.